Reading from the N-terminus, the 434-residue chain is Cytochrome b-c1 complex subunit 2, mitochondrial (434 aa).

A mitochondrion-targeting transit peptide spans 1–31 (MYSLNRLPRSAAFKSSANLLRRNASTTSAGG).

Belongs to the peptidase M16 family. UQCRC2/QCR2 subfamily. Component of the ubiquinol-cytochrome c oxidoreductase (cytochrome b-c1 complex, complex III, CIII), a multisubunit enzyme composed of 10 subunits. The complex is composed of 3 respiratory subunits cytochrome b (COB), cytochrome c1 (CYT1) and Rieske protein (RIP1), 2 core protein subunits COR1 and QCR2, and 5 low-molecular weight protein subunits QCR6, QCR7, QCR8, QCR9 and QCR10. The complex exists as an obligatory dimer and forms supercomplexes (SCs) in the inner mitochondrial membrane with a monomer or a dimer of cytochrome c oxidase (complex IV, CIV), resulting in 2 different assemblies (supercomplexes III(2)IV and III(2)IV(2)). Interacts with MRJ1.

The protein localises to the mitochondrion inner membrane. In terms of biological role, component of the ubiquinol-cytochrome c oxidoreductase, a multisubunit transmembrane complex that is part of the mitochondrial electron transport chain which drives oxidative phosphorylation. The respiratory chain contains 3 multisubunit complexes succinate dehydrogenase (complex II, CII), ubiquinol-cytochrome c oxidoreductase (cytochrome b-c1 complex, complex III, CIII) and cytochrome c oxidase (complex IV, CIV), that cooperate to transfer electrons derived from NADH and succinate to molecular oxygen, creating an electrochemical gradient over the inner membrane that drives transmembrane transport and the ATP synthase. The cytochrome b-c1 complex catalyzes electron transfer from ubiquinol to cytochrome c, linking this redox reaction to translocation of protons across the mitochondrial inner membrane, with protons being carried across the membrane as hydrogens on the quinol. In the process called Q cycle, 2 protons are consumed from the matrix, 4 protons are released into the intermembrane space and 2 electrons are passed to cytochrome c. The protein is Cytochrome b-c1 complex subunit 2, mitochondrial of Cryptococcus neoformans var. grubii serotype A (strain H99 / ATCC 208821 / CBS 10515 / FGSC 9487) (Filobasidiella neoformans var. grubii).